The chain runs to 146 residues: Hemoglobin subunit beta (146 aa).

At Val1 the chain carries N-acetylvaline. Residues 2 to 146 (HLTGEEKSAV…VANALAHKYH (145 aa)) form the Globin domain. At Thr12 the chain carries Phosphothreonine. Ser44 carries the post-translational modification Phosphoserine. At Lys59 the chain carries N6-acetyllysine. His63 contributes to the heme b binding site. Residue Lys82 is modified to N6-acetyllysine. Heme b is bound at residue His92. S-nitrosocysteine is present on Cys93. Lys144 is modified (N6-acetyllysine).

It belongs to the globin family. In terms of assembly, heterotetramer of two alpha chains and two beta chains. As to expression, red blood cells.

Functionally, involved in oxygen transport from the lung to the various peripheral tissues. The sequence is that of Hemoglobin subunit beta (HBB) from Phoca vitulina (Harbor seal).